The following is a 547-amino-acid chain: MFS-type transporter M6 (547 aa).

Positions 1-45 (MHRRRRDNLMTPAEMVASMKPPQSLSTEDDDGSRRDSESSADVLK) are disordered. Residues 81 to 101 (VLVVASFAAAISPFSTSTYYP) traverse the membrane as a helical segment. Residue Asn118 is glycosylated (N-linked (GlcNAc...) asparagine). The helical transmembrane segment at 146-166 (PMFLVCFAIYFVANVGLALQN) threads the bilayer. Asn167 carries N-linked (GlcNAc...) asparagine glycosylation. The next 2 membrane-spanning stretches (helical) occupy residues 206 to 226 (LIYATLGSTLGPFLGPVIGGL) and 236 to 256 (VFWFLLCMGTVFALLIFIFFG). An N-linked (GlcNAc...) asparagine glycan is attached at Asn274. The next 5 membrane-spanning stretches (helical) occupy residues 317–337 (FILSVSGGLLYAGYSSVTSVL), 347–367 (YDAVQVGLCYLPVGFGSLLAY), 407–427 (LGFVFPMILVCSVLLVAYGWQ), 432–452 (APLAPILVTMFLIAIILTGVM), and 469–489 (AVGAAMNLTRLLLGAGAVAVV). Residue Asn493 is glycosylated (N-linked (GlcNAc...) asparagine). Residues 496 to 516 (AGIGWTATVTAGLWVLMMPTL) traverse the membrane as a helical segment.

It belongs to the major facilitator superfamily. CAR1 family.

Its subcellular location is the membrane. In terms of biological role, MFS-type transporter; part of the gene cluster that mediates the biosynthesis of squalestatin S1 (SQS1, also known as zaragozic acid A), a heavily oxidized fungal polyketide that offers potent cholesterol lowering activity by targeting squalene synthase (SS). The protein is MFS-type transporter M6 of Phoma sp. (strain ATCC 20986 / MF5453).